A 550-amino-acid polypeptide reads, in one-letter code: Eukaryotic translation initiation factor 3 subunit D-2 (550 aa).

The disordered stretch occupies residues 97–126 (RGRGFRPSVHNNPRNVRNQRGRKGNAMGNI). Positions 287–301 (KFDMLTVNETSQEPP) are RNA gate. Residues 530–550 (SDVSEEEESSEDKPFGLSMNN) form a disordered region.

This sequence belongs to the eIF-3 subunit D family. In terms of assembly, component of the eukaryotic translation initiation factor 3 (eIF-3) complex. The eIF-3 complex interacts with pix.

It is found in the cytoplasm. MRNA cap-binding component of the eukaryotic translation initiation factor 3 (eIF-3) complex, which is involved in protein synthesis of a specialized repertoire of mRNAs and, together with other initiation factors, stimulates binding of mRNA and methionyl-tRNAi to the 40S ribosome. The eIF-3 complex specifically targets and initiates translation of a subset of mRNAs involved in cell proliferation. In the eIF-3 complex, eif3d specifically recognizes and binds the 7-methylguanosine cap of a subset of mRNAs. This Drosophila willistoni (Fruit fly) protein is Eukaryotic translation initiation factor 3 subunit D-2.